Reading from the N-terminus, the 496-residue chain is Glycylpeptide N-tetradecanoyltransferase 1 (496 aa).

A disordered region spans residues M1–N82. 2 positions are modified to phosphoserine: S31 and S47. Residues K55 to E66 are compositionally biased toward basic residues. S83 bears the Phosphoserine mark. Residues Q118, F119, W120, F247, L248, C249, V250, S256, R258, V259, and A260 each contribute to the tetradecanoyl-CoA site.

The protein belongs to the NMT family. Heart, gut, kidney, liver and placenta.

Its subcellular location is the cytoplasm. It is found in the cytosol. The protein resides in the membrane. It catalyses the reaction N-terminal glycyl-[protein] + tetradecanoyl-CoA = N-tetradecanoylglycyl-[protein] + CoA + H(+). The enzyme catalyses N-terminal glycyl-L-lysyl-[protein] + tetradecanoyl-CoA = N-terminal glycyl-(N(6)-tetradecanoyl)-L-lysyl-[protein] + CoA + H(+). Adds a myristoyl group to the N-terminal glycine residue of certain cellular and viral proteins. Also able to mediate N-terminal lysine myristoylation of proteins: catalyzes myristoylation of ARF6 on both 'Gly-2' and 'Lys-3'. Lysine myristoylation is required to maintain ARF6 on membranes during the GTPase cycle. The protein is Glycylpeptide N-tetradecanoyltransferase 1 of Homo sapiens (Human).